Consider the following 196-residue polypeptide: MAKQPSDVNSECDREGGQLQPAERPPQLRPGAPTSLQTESQGNPDGEGDRCPHGSPQGPLAPPASPGPFATRSPLFIFVRRSSLLSRSSSGYFSFDTDRSPAPMSCDKSTQTPSPPCQAFNHYLSAMASIRQSQEEPEDLRPEIRIAQELRRIGDEFNETYTRRAFANDYREAEDHPQMVILQLLRFIFRLVWRRH.

The disordered stretch occupies residues 1-68; that stretch reads MAKQPSDVNS…PLAPPASPGP (68 aa). The span at 34–43 shows a compositional bias: polar residues; the sequence is TSLQTESQGN. S65 bears the Phosphoserine; by MAPK mark. S73, S83, and S90 each carry phosphoserine. A disordered region spans residues 90 to 114; that stretch reads SGYFSFDTDRSPAPMSCDKSTQTPS. The BH3 signature appears at 146–160; sequence IAQELRRIGDEFNET.

The protein belongs to the Bcl-2 family. In terms of assembly, forms heterodimers with a number of antiapoptotic Bcl-2 proteins, including MCL1, BCL2, BCL2L1 isoform Bcl-X(L), BCL2A1/BFL-1, and BCL2L2/BCLW. Does not heterodimerize with proapoptotic proteins such as BAD, BOK or BAK. Identified in a complex containing BCL2L11, DYNLL1 and BCL2L1 isoform Bcl-X(L); BH3 integrity is required for BCL2L1-binding. Interacts with YWHAZ. When phosphorylated, interacts with TRIM2; this interaction is associated with ubiquitination and degradation. Interacts (via BH3) with MCL1; this interaction may sequester BCL2L11 and prevent its pro-apoptotic activity. When phosphorylated, isoform BimEL interacts with USP27X; this interaction leads to BCL2L11 deubiquitination and stabilization. Interacts with GIMAP5. Interacts with BCL2L10/BCL-B. In terms of processing, phosphorylation at Ser-65 by MAPK1/MAPK3 leads interaction with TRIM2 and ubiquitination, followed by proteasomal degradation. Deubiquitination catalyzed by USP27X stabilizes the protein. Post-translationally, ubiquitination by TRIM2 following phosphorylation by MAPK1/MAPK3 leads to proteasomal degradation. Conversely, deubiquitination catalyzed by USP27X stabilizes the protein. In terms of tissue distribution, widely expressed.

Its subcellular location is the membrane. The protein localises to the mitochondrion. Its function is as follows. Induces apoptosis and anoikis. The sequence is that of Bcl-2-like protein 11 (Bcl2l11) from Rattus norvegicus (Rat).